The primary structure comprises 427 residues: Acyl-CoA hydrolase 2 (427 aa).

Residue 15-83 (LLQKLPSSSL…FLLKQYDYFG (69 aa)) coordinates a nucleoside 3',5'-cyclic phosphate. Catalysis depends on charge relay system residues Asp337, Ser359, and Gln409. Positions 425–427 (SKL) match the Microbody targeting signal motif.

The protein belongs to the C/M/P thioester hydrolase family. As to quaternary structure, homotetramer. As to expression, mostly expressed in leaves and flowers, and, to a lower extent, in seedlings and siliques.

The protein localises to the peroxisome matrix. It carries out the reaction a fatty acyl-CoA + H2O = a fatty acid + CoA + H(+). It catalyses the reaction dodecanoyl-CoA + H2O = dodecanoate + CoA + H(+). The enzyme catalyses tetradecanoyl-CoA + H2O = tetradecanoate + CoA + H(+). The catalysed reaction is octadecanoyl-CoA + H2O = octadecanoate + CoA + H(+). It carries out the reaction (9Z)-hexadecenoyl-CoA + H2O = (9Z)-hexadecenoate + CoA + H(+). It catalyses the reaction (5Z,8Z,11Z,14Z)-eicosatetraenoyl-CoA + H2O = (5Z,8Z,11Z,14Z)-eicosatetraenoate + CoA + H(+). The enzyme catalyses hexadecanoyl-CoA + H2O = hexadecanoate + CoA + H(+). The catalysed reaction is (9Z)-octadecenoyl-CoA + H2O = (9Z)-octadecenoate + CoA + H(+). It carries out the reaction (9Z,12Z)-octadecadienoyl-CoA + H2O = (9Z,12Z)-octadecadienoate + CoA + H(+). It functions in the pathway lipid metabolism; fatty acid metabolism. With respect to regulation, insensitive to feedback inhibition by free coenzyme A (CoASH). Functionally, catalyzes the hydrolysis of acyl-CoAs into free fatty acids and coenzyme A (CoASH), regulating their respective intracellular levels. Active with both medium chain and long chain acyl-CoAs (e.g. 12:0-CoA, 14:0-CoA, 16:0-CoA, 18:0-CoA, 16:1-CoA, 18:1-CoA, 18:2-CoA and 20:4-CoA) as substrates, palmitoleoyl-CoA (16:1-CoA) being the favorite substrate. This chain is Acyl-CoA hydrolase 2, found in Arabidopsis thaliana (Mouse-ear cress).